The chain runs to 309 residues: Taste receptor type 2 member 31 (309 aa).

At 1–2 the chain is on the extracellular side; the sequence is MT. The chain crosses the membrane as a helical span at residues 3–23; sequence TFIPIIFSSLVVVIFVIGNFA. Topologically, residues 24-55 are cytoplasmic; the sequence is NGFIALVNSIEWFKRQKISFADQILTALAVSR. Residues 56 to 76 form a helical membrane-spanning segment; that stretch reads VGLLWVLLLNWYSTVLNPAFY. Residues 77-100 lie on the Extracellular side of the membrane; that stretch reads SVEVRTTAYNVWAVTGHFSNWLAT. A helical transmembrane segment spans residues 101–121; sequence SLSIFYLLKIANFSNLIFLHL. Topologically, residues 122 to 126 are cytoplasmic; it reads KRRVK. A helical transmembrane segment spans residues 127-147; it reads SVILVMLLGPLLFLACQLFMI. Over 148–181 the chain is Extracellular; sequence NMKEIVRTKEYEGNMTWKIKLRSAVYLSDATVTT. A glycan (N-linked (GlcNAc...) asparagine) is linked at Asn-161. The chain crosses the membrane as a helical span at residues 182–202; it reads LGNLVPFTLTLLCFLLLICSL. The Cytoplasmic portion of the chain corresponds to 203-229; sequence CKHLKKMQLHGKGSQDPSTKVHIKVLQ. The helical transmembrane segment at 230–250 threads the bilayer; it reads TVISFLLLCAIYFLSIMISVW. Residues 251–259 lie on the Extracellular side of the membrane; that stretch reads SFGSLKNKP. The helical transmembrane segment at 260-280 threads the bilayer; that stretch reads VFMFCKAMRFSYPSIHPFILI. Over 281–309 the chain is Cytoplasmic; the sequence is WGNKKLKQTFLSVLRQVRYWVKGEKPSSP.

This sequence belongs to the G-protein coupled receptor T2R family.

The protein resides in the membrane. In terms of biological role, receptor that may play a role in the perception of bitterness and is gustducin-linked. May play a role in sensing the chemical composition of the gastrointestinal content. The activity of this receptor may stimulate alpha gustducin, mediate PLC-beta-2 activation and lead to the gating of TRPM5. This chain is Taste receptor type 2 member 31 (TAS2R31), found in Pan troglodytes (Chimpanzee).